We begin with the raw amino-acid sequence, 238 residues long: Large ribosomal subunit protein uL2 (238 aa).

The interval 203–223 is disordered; it reads GGGAWKHPGKPTTVSRNAPPG.

The protein belongs to the universal ribosomal protein uL2 family. Part of the 50S ribosomal subunit. Forms a bridge to the 30S subunit in the 70S ribosome.

In terms of biological role, one of the primary rRNA binding proteins. Required for association of the 30S and 50S subunits to form the 70S ribosome, for tRNA binding and peptide bond formation. It has been suggested to have peptidyltransferase activity; this is somewhat controversial. Makes several contacts with the 16S rRNA in the 70S ribosome. The sequence is that of Large ribosomal subunit protein uL2 from Methanosarcina barkeri (strain Fusaro / DSM 804).